Here is a 320-residue protein sequence, read N- to C-terminus: NAD kinase (320 aa).

D96 functions as the Proton acceptor in the catalytic mechanism. Residues 96 to 97 (DG), R101, 170 to 171 (NE), D200, and 211 to 216 (TAYAFS) each bind NAD(+).

Belongs to the NAD kinase family. The cofactor is a divalent metal cation.

The protein localises to the cytoplasm. The catalysed reaction is NAD(+) + ATP = ADP + NADP(+) + H(+). Its function is as follows. Involved in the regulation of the intracellular balance of NAD and NADP, and is a key enzyme in the biosynthesis of NADP. Catalyzes specifically the phosphorylation on 2'-hydroxyl of the adenosine moiety of NAD to yield NADP. The chain is NAD kinase from Rhodococcus jostii (strain RHA1).